The primary structure comprises 205 residues: Glycerol-3-phosphate acyltransferase (205 aa).

6 helical membrane-spanning segments follow: residues 8–28, 57–77, 84–104, 118–138, 143–163, and 164–184; these read IALFTLLVSYLLGSLPSGYLA, TPALFVFFIDVTKGIGAILIA, ESLQIAAGLASLSGHIWPVWL, VFLGISWQVGLGSLGIFLLIL, IVSLASISAAISLPVLMLINS, and KETFSIPYIVISFIAMILVLW.

It belongs to the PlsY family. Probably interacts with PlsX.

It localises to the cell inner membrane. The catalysed reaction is an acyl phosphate + sn-glycerol 3-phosphate = a 1-acyl-sn-glycero-3-phosphate + phosphate. It participates in lipid metabolism; phospholipid metabolism. Functionally, catalyzes the transfer of an acyl group from acyl-phosphate (acyl-PO(4)) to glycerol-3-phosphate (G3P) to form lysophosphatidic acid (LPA). This enzyme utilizes acyl-phosphate as fatty acyl donor, but not acyl-CoA or acyl-ACP. This is Glycerol-3-phosphate acyltransferase from Prochlorococcus marinus (strain SARG / CCMP1375 / SS120).